The following is a 555-amino-acid chain: Anaerobic magnesium-protoporphyrin IX monomethyl ester cyclase (555 aa).

The B12-binding domain maps to 9–143 (NYHSGGAEIA…TAVDQGRFMA (135 aa)). A Radical SAM core domain is found at 191-416 (PMNKRVAIPN…MKPDAMDRGE (226 aa)). Cys-205, Cys-209, and Cys-212 together coordinate [4Fe-4S] cluster.

This sequence belongs to the BchE family. The cofactor is [4Fe-4S] cluster. It depends on adenosylcob(III)alamin as a cofactor.

It catalyses the reaction Mg-protoporphyrin IX 13-monomethyl ester + 3 S-adenosyl-L-methionine + H2O = 3,8-divinyl protochlorophyllide a + 3 5'-deoxyadenosine + 3 L-methionine + 4 H(+). Its pathway is porphyrin-containing compound metabolism; bacteriochlorophyll biosynthesis (light-independent). Involved in the tetrapyrrole biosynthetic pathways leading to chlorophyll and bacteriochlorophyll (BChl). Catalyzes the anaerobic formation of the isocyclic ring (E-ring) in Mg-protoporphyrin monomethyl ester (MPE) to yield protochlorophyllide a (PChlide a) via a six-electron oxidation and the formation of an oxo group at position C13 using oxygen from a water molecule. This is Anaerobic magnesium-protoporphyrin IX monomethyl ester cyclase (bchE) from Rubrivivax gelatinosus (Rhodocyclus gelatinosus).